We begin with the raw amino-acid sequence, 456 residues long: Amino acid transporter AVT6B (456 aa).

The next 11 helical transmembrane spans lie at 37-57 (FSGA…MALP), 58-78 (ATMK…MAFL), 118-138 (ILVS…DVLA), 164-184 (TFVL…FKRI), 191-211 (SAIS…ITII), 236-256 (LFTV…VHSI), 273-293 (ALAM…LLFG), 328-348 (LMLV…GLIF), 365-385 (SITA…PSIW), 388-408 (FQFT…AAVI), and 423-443 (IAIC…YSDA).

Belongs to the amino acid/polyamine transporter 2 family. Amino acid/auxin permease (AAAP) (TC 2.A.18.6) subfamily.

It is found in the membrane. This is Amino acid transporter AVT6B from Arabidopsis thaliana (Mouse-ear cress).